Reading from the N-terminus, the 289-residue chain is Elongation factor Ts (289 aa).

The involved in Mg(2+) ion dislocation from EF-Tu stretch occupies residues 82–85 (TDFV).

The protein belongs to the EF-Ts family.

Its subcellular location is the cytoplasm. In terms of biological role, associates with the EF-Tu.GDP complex and induces the exchange of GDP to GTP. It remains bound to the aminoacyl-tRNA.EF-Tu.GTP complex up to the GTP hydrolysis stage on the ribosome. This chain is Elongation factor Ts, found in Chloroherpeton thalassium (strain ATCC 35110 / GB-78).